Consider the following 208-residue polypeptide: Uridine kinase (208 aa).

11 to 18 (GGTGSGKS) provides a ligand contact to ATP.

It belongs to the uridine kinase family.

It localises to the cytoplasm. It catalyses the reaction uridine + ATP = UMP + ADP + H(+). The enzyme catalyses cytidine + ATP = CMP + ADP + H(+). It participates in pyrimidine metabolism; CTP biosynthesis via salvage pathway; CTP from cytidine: step 1/3. It functions in the pathway pyrimidine metabolism; UMP biosynthesis via salvage pathway; UMP from uridine: step 1/1. The polypeptide is Uridine kinase (Clostridium perfringens (strain ATCC 13124 / DSM 756 / JCM 1290 / NCIMB 6125 / NCTC 8237 / Type A)).